The sequence spans 229 residues: Small ribosomal subunit protein uS5 (229 aa).

Residues 61–124 (LEEQVLDVKL…AHAKLSLIKV (64 aa)) enclose the S5 DRBM domain.

This sequence belongs to the universal ribosomal protein uS5 family. In terms of assembly, part of the 30S ribosomal subunit. Contacts protein S4.

Its function is as follows. With S4 and S12 plays an important role in translational accuracy. This is Small ribosomal subunit protein uS5 from Methanococcus maripaludis (strain C7 / ATCC BAA-1331).